Here is a 127-residue protein sequence, read N- to C-terminus: Aspartate 1-decarboxylase (127 aa).

Residue S25 is the Schiff-base intermediate with substrate; via pyruvic acid of the active site. S25 is subject to Pyruvic acid (Ser). Residue T57 participates in substrate binding. The Proton donor role is filled by Y58. 73-75 contacts substrate; sequence GAA.

This sequence belongs to the PanD family. As to quaternary structure, heterooctamer of four alpha and four beta subunits. The cofactor is pyruvate. Is synthesized initially as an inactive proenzyme, which is activated by self-cleavage at a specific serine bond to produce a beta-subunit with a hydroxyl group at its C-terminus and an alpha-subunit with a pyruvoyl group at its N-terminus.

Its subcellular location is the cytoplasm. It catalyses the reaction L-aspartate + H(+) = beta-alanine + CO2. Its pathway is cofactor biosynthesis; (R)-pantothenate biosynthesis; beta-alanine from L-aspartate: step 1/1. Functionally, catalyzes the pyruvoyl-dependent decarboxylation of aspartate to produce beta-alanine. This is Aspartate 1-decarboxylase from Halalkalibacterium halodurans (strain ATCC BAA-125 / DSM 18197 / FERM 7344 / JCM 9153 / C-125) (Bacillus halodurans).